The primary structure comprises 547 residues: Chaperonin GroEL (547 aa).

ATP-binding positions include 30-33, Lys51, 87-91, Gly415, and Asp496; these read TLGP and DGTTT.

This sequence belongs to the chaperonin (HSP60) family. Forms a cylinder of 14 subunits composed of two heptameric rings stacked back-to-back. Interacts with the co-chaperonin GroES.

It is found in the cytoplasm. The enzyme catalyses ATP + H2O + a folded polypeptide = ADP + phosphate + an unfolded polypeptide.. Together with its co-chaperonin GroES, plays an essential role in assisting protein folding. The GroEL-GroES system forms a nano-cage that allows encapsulation of the non-native substrate proteins and provides a physical environment optimized to promote and accelerate protein folding. This chain is Chaperonin GroEL, found in Actinobacillus pleuropneumoniae serotype 5b (strain L20).